The following is a 152-amino-acid chain: Small ribosomal subunit protein uS13 (152 aa).

Residues 133–152 are disordered; sequence GQHTKTTGRRGRTVGVSKKK.

This sequence belongs to the universal ribosomal protein uS13 family.

Its subcellular location is the cytoplasm. Its function is as follows. Located at the top of the head of the 40S subunit, it contacts several helices of the 18S rRNA. This is Small ribosomal subunit protein uS13 (RpS18) from Spodoptera frugiperda (Fall armyworm).